Consider the following 104-residue polypeptide: Phosphoribosyl-ATP pyrophosphatase (104 aa).

The protein belongs to the PRA-PH family.

It is found in the cytoplasm. The catalysed reaction is 1-(5-phospho-beta-D-ribosyl)-ATP + H2O = 1-(5-phospho-beta-D-ribosyl)-5'-AMP + diphosphate + H(+). It functions in the pathway amino-acid biosynthesis; L-histidine biosynthesis; L-histidine from 5-phospho-alpha-D-ribose 1-diphosphate: step 2/9. The protein is Phosphoribosyl-ATP pyrophosphatase of Streptococcus gordonii (strain Challis / ATCC 35105 / BCRC 15272 / CH1 / DL1 / V288).